The chain runs to 255 residues: Acetylglutamate kinase (255 aa).

Substrate is bound by residues 40 to 41 (GG), Arg62, and Asn153.

The protein belongs to the acetylglutamate kinase family. ArgB subfamily.

It localises to the cytoplasm. It catalyses the reaction N-acetyl-L-glutamate + ATP = N-acetyl-L-glutamyl 5-phosphate + ADP. Its pathway is amino-acid biosynthesis; L-arginine biosynthesis; N(2)-acetyl-L-ornithine from L-glutamate: step 2/4. In terms of biological role, catalyzes the ATP-dependent phosphorylation of N-acetyl-L-glutamate. The protein is Acetylglutamate kinase of Bacillus cereus (strain ATCC 14579 / DSM 31 / CCUG 7414 / JCM 2152 / NBRC 15305 / NCIMB 9373 / NCTC 2599 / NRRL B-3711).